A 388-amino-acid chain; its full sequence is Succinate--CoA ligase [ADP-forming] subunit beta (388 aa).

The ATP-grasp domain occupies 9-244 (KQLFAEFGLP…PSQEDKREAH (236 aa)). Residues Lys-46, 53-55 (GRG), Glu-99, Ser-102, and Glu-107 each bind ATP. Mg(2+) contacts are provided by Asn-199 and Asp-213. Residues Asn-264 and 321 to 323 (GIV) contribute to the substrate site.

It belongs to the succinate/malate CoA ligase beta subunit family. As to quaternary structure, heterotetramer of two alpha and two beta subunits. Mg(2+) serves as cofactor.

The catalysed reaction is succinate + ATP + CoA = succinyl-CoA + ADP + phosphate. It catalyses the reaction GTP + succinate + CoA = succinyl-CoA + GDP + phosphate. Its pathway is carbohydrate metabolism; tricarboxylic acid cycle; succinate from succinyl-CoA (ligase route): step 1/1. In terms of biological role, succinyl-CoA synthetase functions in the citric acid cycle (TCA), coupling the hydrolysis of succinyl-CoA to the synthesis of either ATP or GTP and thus represents the only step of substrate-level phosphorylation in the TCA. The beta subunit provides nucleotide specificity of the enzyme and binds the substrate succinate, while the binding sites for coenzyme A and phosphate are found in the alpha subunit. This is Succinate--CoA ligase [ADP-forming] subunit beta from Vibrio vulnificus (strain CMCP6).